The chain runs to 829 residues: Disintegrin and metalloproteinase domain-containing protein 23 (829 aa).

Positions 1–55 (MKPPGSISRRPTLTGCSLPGASCGPGRCPAGPVPARAPPCRLLLVLLLLPALATS) are cleaved as a signal peptide. A propeptide spanning residues 56 to 283 (SRPRARGAAA…ELQWLRRRKR (228 aa)) is cleaved from the precursor. N-linked (GlcNAc...) asparagine glycosylation is found at Asn72, Asn92, Asn97, and Asn260. Topologically, residues 284–789 (AVNPSRGVFE…EGPKGPSATN (506 aa)) are extracellular. One can recognise a Peptidase M12B domain in the interval 296–493 (KYLELMIVND…GGGACLFNRP (198 aa)). 3 disulfides stabilise this stretch: Cys405/Cys488, Cys447/Cys472, and Cys449/Cys456. One can recognise a Disintegrin domain in the interval 499-585 (PTECGNGYVE…QCPPNLHKQD (87 aa)). 2 N-linked (GlcNAc...) asparagine glycosylation sites follow: Asn544 and Asn545. Residues Cys557 and Cys577 are joined by a disulfide bond. Residues Asn661 and Asn729 are each glycosylated (N-linked (GlcNAc...) asparagine). Positions 729 to 766 (NMSSCPLDSRGKVCSGHGVCSNEATCICDFTWAGTDCS) constitute an EGF-like domain. Intrachain disulfides connect Cys733-Cys748, Cys742-Cys754, and Cys756-Cys765. Residues 790-810 (LIIGSIAGAILVAAIVLGGTG) traverse the membrane as a helical segment. Residues 811 to 829 (WGFKNVKKRRFDPTQQGPI) lie on the Cytoplasmic side of the membrane.

In terms of assembly, can bind to LGI1 and LGI4. Brain specific.

The protein localises to the cell membrane. The protein resides in the secreted. May play a role in cell-cell and cell-matrix interactions. This is a non-catalytic metalloprotease-like protein. This chain is Disintegrin and metalloproteinase domain-containing protein 23 (Adam23), found in Mus musculus (Mouse).